Reading from the N-terminus, the 503-residue chain is Pre-glycoprotein polyprotein GP complex (503 aa).

A lipid anchor (N-myristoyl glycine; by host) is attached at Gly2. Topologically, residues 2–17 are extracellular; it reads GQIVTLIQSIPEVLQE. The chain crosses the membrane as a helical span at residues 18 to 33; that stretch reads VFNVALIIVSVLCIVK. At 34–58 the chain is on the cytoplasmic side; that stretch reads GFVNLMRCGLFQLVTFLILSGRSCD. Cys57 serves as a coordination point for Zn(2+). The Extracellular segment spans residues 59-446; the sequence is SMMIDRRHNL…QGKTPLALTD (388 aa). 4 cysteine pairs are disulfide-bonded: Cys86–Cys248, Cys293–Cys306, Cys315–Cys324, and Cys378–Cys399. Residues Asn89, Asn111, Asn181, and Asn241 are each glycosylated (N-linked (GlcNAc...) asparagine; by host). N-linked (GlcNAc...) asparagine; by host glycans are attached at residues Asn379, Asn387, Asn404, and Asn409. Residues 447-467 form a helical membrane-spanning segment; sequence ICFWSLVFYTITVFLHIVGIP. Topologically, residues 468 to 503 are cytoplasmic; sequence THRHIIGDGCPKPHRITRNSLCSCGYYKYQRNLTNG. 6 residues coordinate Zn(2+): His469, His471, Cys477, His481, Cys489, and Cys491.

This sequence belongs to the arenaviridae GPC protein family. As to quaternary structure, interacts with glycoprotein G2. Part of the GP complex (GP-C) together with glycoprotein G1 and glycoprotein G2. The GP-complex interacts with protein Z, which interacts with ribonucleocapsid; these interactions may induce virion budding. In terms of assembly, homotrimer; disulfide-linked. In pre-fusion state, G1 homotrimers bind G2 homotrimers via ionic interactions. Part of the GP complex (GP-C) together with glycoprotein G2 and the stable signal peptide. The GP-complex interacts with protein Z, which interacts with ribonucleocapsid; these interactions may induce virion budding. Homotrimer. Interacts with the stable signal peptide. In pre-fusion state, G2 homotrimers bind G1 homotrimers via ionic interactions. Part of the GP complex (GP-C) together with glycoprotein G1 and the stable signal peptide. Acidification in the endosome triggers rearrangements, which ultimately leads to a 6 helix bundle formed by the two heptad repeat domains (HR1 and HR2) in post-fusion state. The GP-complex interacts with protein Z, which interacts with ribonucleocapsid; these interactions may induce virion budding. Post-translationally, specific enzymatic cleavages in vivo yield mature proteins. GP-C polyprotein is cleaved in the endoplasmic reticulum by the host protease MBTPS1. Only cleaved glycoprotein is incorporated into virions. The SSP remains stably associated with the GP complex following cleavage by signal peptidase and plays crucial roles in the trafficking of GP through the secretory pathway. In terms of processing, myristoylation is necessary for GP2-mediated fusion activity.

The protein localises to the virion membrane. The protein resides in the host endoplasmic reticulum membrane. It localises to the host Golgi apparatus membrane. Its subcellular location is the host cell membrane. Functions as a cleaved signal peptide that is retained as the third component of the GP complex (GP-C). Helps to stabilize the spike complex in its native conformation. The SSP is required for efficient glycoprotein expression, post-translational maturation cleavage of G1 and G2, glycoprotein transport to the cell surface plasma membrane, formation of infectious virus particles, and acid pH-dependent glycoprotein-mediated cell fusion. Its function is as follows. Forms the virion spikes together with glycoprotein G2. The glycoprotein spike trimers are connected to the underlying matrix. Interacts with the host receptor leading to virus endocytosis. Functionally, forms the virion spikes together with glycoprotein G1. The glycoprotein spike trimers are connected to the underlying matrix. Class I viral fusion protein that directs fusion of viral and host endosomal membranes, leading to delivery of the nucleocapsid into the cytoplasm. Membrane fusion is mediated by irreversible conformational changes induced by acidification. The protein is Pre-glycoprotein polyprotein GP complex of Cavia cutleri (Guinea pig).